The following is a 510-amino-acid chain: Propionyl-CoA carboxylase beta chain (510 aa).

Positions 1-257 (MKDILQELEN…SNRTPAPVRP (257 aa)) constitute a CoA carboxyltransferase N-terminal domain. The tract at residues 1–504 (MKDILQELEN…NKKLANPWKK (504 aa)) is carboxyltransferase. The region spanning 264 to 504 (RIEDSLDTLI…NKKLANPWKK (241 aa)) is the CoA carboxyltransferase C-terminal domain.

The protein belongs to the AccD/PCCB family. As to quaternary structure, probably a dodecamer composed of six biotin-containing alpha subunits and six beta subunits.

It carries out the reaction propanoyl-CoA + hydrogencarbonate + ATP = (S)-methylmalonyl-CoA + ADP + phosphate + H(+). Its pathway is metabolic intermediate metabolism; propanoyl-CoA degradation; succinyl-CoA from propanoyl-CoA: step 1/3. The protein is Propionyl-CoA carboxylase beta chain of Cereibacter sphaeroides (strain ATCC 17023 / DSM 158 / JCM 6121 / CCUG 31486 / LMG 2827 / NBRC 12203 / NCIMB 8253 / ATH 2.4.1.) (Rhodobacter sphaeroides).